We begin with the raw amino-acid sequence, 419 residues long: Tyrosine--tRNA ligase (419 aa).

Y34 provides a ligand contact to L-tyrosine. A 'HIGH' region motif is present at residues 39–48 (PTADSLHIGN). Y169 and Q173 together coordinate L-tyrosine. Residues 230–234 (KFGKT) carry the 'KMSKS' region motif. Residue K233 participates in ATP binding. The S4 RNA-binding domain maps to 352–419 (VPLVELLVSA…KKKYYLIRYA (68 aa)).

It belongs to the class-I aminoacyl-tRNA synthetase family. TyrS type 1 subfamily. As to quaternary structure, homodimer.

It localises to the cytoplasm. The catalysed reaction is tRNA(Tyr) + L-tyrosine + ATP = L-tyrosyl-tRNA(Tyr) + AMP + diphosphate + H(+). Catalyzes the attachment of tyrosine to tRNA(Tyr) in a two-step reaction: tyrosine is first activated by ATP to form Tyr-AMP and then transferred to the acceptor end of tRNA(Tyr). This Bacillus caldotenax protein is Tyrosine--tRNA ligase.